We begin with the raw amino-acid sequence, 101 residues long: Large ribosomal subunit protein uL24 (101 aa).

The protein belongs to the universal ribosomal protein uL24 family. In terms of assembly, part of the 50S ribosomal subunit.

Its function is as follows. One of two assembly initiator proteins, it binds directly to the 5'-end of the 23S rRNA, where it nucleates assembly of the 50S subunit. Functionally, one of the proteins that surrounds the polypeptide exit tunnel on the outside of the subunit. In Dinoroseobacter shibae (strain DSM 16493 / NCIMB 14021 / DFL 12), this protein is Large ribosomal subunit protein uL24.